Consider the following 403-residue polypeptide: Digeranylgeranylglycerophospholipid reductase 1 (403 aa).

The FAD site is built by Ala-14, Asp-33, Cys-44, Ala-45, Gly-47, Arg-98, Val-122, Asp-277, Gly-289, and Ile-290.

The protein belongs to the geranylgeranyl reductase family. DGGGPL reductase subfamily. It depends on FAD as a cofactor.

It catalyses the reaction a 2,3-bis-O-phytanyl-sn-glycerol 1-phospholipid + 8 A = a 2,3-bis-O-(geranylgeranyl)-sn-glycerol 1-phospholipid + 8 AH2. It carries out the reaction 2,3-bis-O-(phytanyl)-sn-glycerol 1-phosphate + 8 A = 2,3-bis-O-(geranylgeranyl)-sn-glycerol 1-phosphate + 8 AH2. The enzyme catalyses CDP-2,3-bis-O-(geranylgeranyl)-sn-glycerol + 8 AH2 = CDP-2,3-bis-O-(phytanyl)-sn-glycerol + 8 A. The catalysed reaction is archaetidylserine + 8 AH2 = 2,3-bis-O-phytanyl-sn-glycero-3-phospho-L-serine + 8 A. Its pathway is membrane lipid metabolism; glycerophospholipid metabolism. Its function is as follows. Is involved in the reduction of 2,3-digeranylgeranylglycerophospholipids (unsaturated archaeols) into 2,3-diphytanylglycerophospholipids (saturated archaeols) in the biosynthesis of archaeal membrane lipids. Catalyzes the formation of archaetidic acid (2,3-di-O-phytanyl-sn-glyceryl phosphate) from 2,3-di-O-geranylgeranylglyceryl phosphate (DGGGP) via the hydrogenation of each double bond of the isoprenoid chains. Is also probably able to reduce double bonds of geranyl groups in CDP-2,3-bis-O-(geranylgeranyl)-sn-glycerol and archaetidylserine, thus acting at various stages in the biosynthesis of archaeal membrane lipids. This chain is Digeranylgeranylglycerophospholipid reductase 1, found in Methanosphaera stadtmanae (strain ATCC 43021 / DSM 3091 / JCM 11832 / MCB-3).